We begin with the raw amino-acid sequence, 143 residues long: Hemoglobin subunit alpha (143 aa).

Ser-2 is subject to N-acetylserine. The Globin domain maps to 2–143; sequence SLSDKDKSAV…VALALAEKYR (142 aa). Residue His-60 coordinates O2. His-89 is a binding site for heme b.

The protein belongs to the globin family. In terms of assembly, heterotetramer of two alpha chains and two beta chains. As to expression, red blood cells.

Involved in oxygen transport from gills to the various peripheral tissues. This chain is Hemoglobin subunit alpha (hba), found in Pogonophryne scotti (Saddleback plunderfish).